The following is a 514-amino-acid chain: 2,3-bisphosphoglycerate-independent phosphoglycerate mutase (514 aa).

Mn(2+)-binding residues include aspartate 14 and serine 64. The active-site Phosphoserine intermediate is serine 64. Substrate contacts are provided by residues histidine 125, 155–156 (RD), arginine 187, arginine 193, 263–266 (RADR), and lysine 336. Mn(2+)-binding residues include aspartate 403, histidine 407, aspartate 444, histidine 445, and histidine 463.

Belongs to the BPG-independent phosphoglycerate mutase family. Monomer. Requires Mn(2+) as cofactor.

The enzyme catalyses (2R)-2-phosphoglycerate = (2R)-3-phosphoglycerate. It participates in carbohydrate degradation; glycolysis; pyruvate from D-glyceraldehyde 3-phosphate: step 3/5. Catalyzes the interconversion of 2-phosphoglycerate and 3-phosphoglycerate. The protein is 2,3-bisphosphoglycerate-independent phosphoglycerate mutase of Escherichia coli (strain ATCC 8739 / DSM 1576 / NBRC 3972 / NCIMB 8545 / WDCM 00012 / Crooks).